Consider the following 102-residue polypeptide: PE family immunomodulator PE5 (102 aa).

The PE domain maps to 3–92 (LRVVPEGLAA…GASYLAGDAA (90 aa)).

The protein belongs to the mycobacterial PE family.

Its subcellular location is the secreted. The protein resides in the cell envelope. It localises to the cell surface. Its function is as follows. Important for the siderophore-mediated iron-acquisition function of ESX-3. May play a pivotal role in the evasion of host immune response by M.tuberculosis. Mediates production of IL-10 via activation of the p38 and ERK1/2 mitogen-activated protein kinase (MAPK) signaling pathways. The sequence is that of PE family immunomodulator PE5 from Mycobacterium tuberculosis (strain ATCC 25618 / H37Rv).